A 547-amino-acid polypeptide reads, in one-letter code: Chaperonin GroEL 1 (547 aa).

ATP is bound by residues 30-33, Lys51, 87-91, Gly415, and Asp496; these read TLGP and DGTTT.

This sequence belongs to the chaperonin (HSP60) family. Forms a cylinder of 14 subunits composed of two heptameric rings stacked back-to-back. Interacts with the co-chaperonin GroES.

The protein localises to the cytoplasm. It carries out the reaction ATP + H2O + a folded polypeptide = ADP + phosphate + an unfolded polypeptide.. Its function is as follows. Together with its co-chaperonin GroES, plays an essential role in assisting protein folding. The GroEL-GroES system forms a nano-cage that allows encapsulation of the non-native substrate proteins and provides a physical environment optimized to promote and accelerate protein folding. The protein is Chaperonin GroEL 1 of Gluconacetobacter diazotrophicus (strain ATCC 49037 / DSM 5601 / CCUG 37298 / CIP 103539 / LMG 7603 / PAl5).